A 300-amino-acid chain; its full sequence is tRNA-cytidine(32) 2-sulfurtransferase (300 aa).

Residues 57–62 carry the PP-loop motif motif; the sequence is SGGKDS. Residues cysteine 132, cysteine 135, and cysteine 223 each contribute to the [4Fe-4S] cluster site.

The protein belongs to the TtcA family. Homodimer. Mg(2+) serves as cofactor. [4Fe-4S] cluster is required as a cofactor.

The protein localises to the cytoplasm. The catalysed reaction is cytidine(32) in tRNA + S-sulfanyl-L-cysteinyl-[cysteine desulfurase] + AH2 + ATP = 2-thiocytidine(32) in tRNA + L-cysteinyl-[cysteine desulfurase] + A + AMP + diphosphate + H(+). The protein operates within tRNA modification. In terms of biological role, catalyzes the ATP-dependent 2-thiolation of cytidine in position 32 of tRNA, to form 2-thiocytidine (s(2)C32). The sulfur atoms are provided by the cysteine/cysteine desulfurase (IscS) system. The chain is tRNA-cytidine(32) 2-sulfurtransferase from Xanthomonas campestris pv. campestris (strain B100).